The chain runs to 205 residues: Myb-related protein 305 (205 aa).

2 consecutive HTH myb-type domains span residues 10 to 62 (DVEV…LNYL) and 63 to 117 (RPDV…QKHM). 2 DNA-binding regions (H-T-H motif) span residues 38–62 (WNSLARSAGLKRTGKSCRLRWLNYL) and 90–113 (WSKIAKTLPGRTDNEIKNYWRTRI).

As to expression, expressed only in flowers.

The protein resides in the nucleus. Functionally, transcription factor. The chain is Myb-related protein 305 from Antirrhinum majus (Garden snapdragon).